The chain runs to 546 residues: Chaperonin GroEL (546 aa).

Residues 30 to 33, Lys51, 87 to 91, Gly415, 479 to 481, and Asp495 each bind ATP; these read TLGP, DGTTT, and NAA.

This sequence belongs to the chaperonin (HSP60) family. As to quaternary structure, forms a cylinder of 14 subunits composed of two heptameric rings stacked back-to-back. Interacts with the co-chaperonin GroES.

Its subcellular location is the cytoplasm. The catalysed reaction is ATP + H2O + a folded polypeptide = ADP + phosphate + an unfolded polypeptide.. Together with its co-chaperonin GroES, plays an essential role in assisting protein folding. The GroEL-GroES system forms a nano-cage that allows encapsulation of the non-native substrate proteins and provides a physical environment optimized to promote and accelerate protein folding. This is Chaperonin GroEL from Pseudomonas putida (strain ATCC 700007 / DSM 6899 / JCM 31910 / BCRC 17059 / LMG 24140 / F1).